The primary structure comprises 209 residues: Peptide deformylase 2 (209 aa).

2 residues coordinate Fe cation: cysteine 101 and histidine 149. Glutamate 150 is a catalytic residue. Histidine 153 lines the Fe cation pocket.

This sequence belongs to the polypeptide deformylase family. It depends on Fe(2+) as a cofactor.

The enzyme catalyses N-terminal N-formyl-L-methionyl-[peptide] + H2O = N-terminal L-methionyl-[peptide] + formate. Functionally, removes the formyl group from the N-terminal Met of newly synthesized proteins. Requires at least a dipeptide for an efficient rate of reaction. N-terminal L-methionine is a prerequisite for activity but the enzyme has broad specificity at other positions. This Coxiella burnetii (strain RSA 493 / Nine Mile phase I) protein is Peptide deformylase 2.